We begin with the raw amino-acid sequence, 298 residues long: Elongation factor Ts (298 aa).

The segment at T80–V83 is involved in Mg(2+) ion dislocation from EF-Tu.

The protein belongs to the EF-Ts family.

The protein resides in the cytoplasm. In terms of biological role, associates with the EF-Tu.GDP complex and induces the exchange of GDP to GTP. It remains bound to the aminoacyl-tRNA.EF-Tu.GTP complex up to the GTP hydrolysis stage on the ribosome. The protein is Elongation factor Ts of Acidovorax sp. (strain JS42).